Here is a 761-residue protein sequence, read N- to C-terminus: Spindle assembly abnormal protein 4 (761 aa).

Acidic residues predominate over residues 1 to 11 (MLPSENGDEDQ). The segment at 1–109 (MLPSENGDED…SNERREEDNV (109 aa)) is disordered. The span at 51–62 (TPTNSAPSSART) shows a compositional bias: polar residues. Over residues 90 to 106 (ESHDSGNRSESNERREE) the composition is skewed to basic and acidic residues. A coiled-coil region spans residues 129 to 156 (ETCSKVSEEATQLRAEADRITAQANFIN). Positions 164 to 173 (TPSSYSSNIS) are enriched in low complexity. Disordered regions lie at residues 164 to 228 (TPSS…QARP) and 252 to 280 (PRRQPMLPAHHHPSQKENVPERKAPSEHV). The segment covering 210-223 (QTLSSLASSGSLDT) has biased composition (polar residues). Over residues 265-280 (SQKENVPERKAPSEHV) the composition is skewed to basic and acidic residues. Residues 326–464 (RKKQEEAYAK…EKDDREKEMF (139 aa)) adopt a coiled-coil conformation. Over residues 479–497 (ATGSAASSRLPSVSSLASS) the composition is skewed to low complexity. A disordered region spans residues 479 to 510 (ATGSAASSRLPSVSSLASSMKTGSTGKGRTVS).

Its subcellular location is the cytoplasm. The protein resides in the cytoskeleton. It localises to the microtubule organizing center. The protein localises to the centrosome. Its function is as follows. Required for centrosome duplication. Plays a central role in determining centrosome size. The sequence is that of Spindle assembly abnormal protein 4 (sas-4) from Caenorhabditis briggsae.